Consider the following 438-residue polypeptide: MKILMVGSGAREHAIAKALNKTADVYTYMGRKNPGLARISKNYTVNDESNFNEIIKFAQENNVELAFIGPEAPLEMGIVDELEKEGIHSVGPTKSAAQIETNKAFMRKLFEDYDIPGSIKYGTFYDLDEAYEFIDNFDEPVVVKPIGLTGGKGVKIVGDQLADNDEAKEYVKEIFHQKMGGFEGVVIEELLLGEEYTIQAFVDGTHLIPMPAAQDHPHAFVGNKGPITGGMGSYSDKNHLLPFLTQEDYDKSVEIMEKTIKAIAKEQEPYKGILYGQFMLCKDGPKVIEYNARFGDPESMNVLSVIDDDLAKISKQIVDGTLDSVNFLNKSSVCKYVVPDKYPNTHVADTVVDVDEDKINELGAQVFYAAVYQDMDDSIKLTSSRALGVLAVKDSIKEAEKICEEAIKYVKGEVYHRNDVATEELLNEKIKHMEEVRL.

Residues 107 to 319 (RKLFEDYDIP…LAKISKQIVD (213 aa)) enclose the ATP-grasp domain. 134-197 (IDNFDEPVVV…EELLLGEEYT (64 aa)) contacts ATP. Residues glutamine 277, glutamate 289, and asparagine 291 each coordinate Mg(2+). 3 residues coordinate Mn(2+): glutamine 277, glutamate 289, and asparagine 291.

Belongs to the GARS family. Mg(2+) is required as a cofactor. Requires Mn(2+) as cofactor.

It catalyses the reaction 5-phospho-beta-D-ribosylamine + glycine + ATP = N(1)-(5-phospho-beta-D-ribosyl)glycinamide + ADP + phosphate + H(+). It functions in the pathway purine metabolism; IMP biosynthesis via de novo pathway; N(1)-(5-phospho-D-ribosyl)glycinamide from 5-phospho-alpha-D-ribose 1-diphosphate: step 2/2. This chain is Phosphoribosylamine--glycine ligase, found in Methanosphaera stadtmanae (strain ATCC 43021 / DSM 3091 / JCM 11832 / MCB-3).